The sequence spans 382 residues: Alanine racemase (382 aa).

K37 acts as the Proton acceptor; specific for D-alanine in catalysis. An N6-(pyridoxal phosphate)lysine modification is found at K37. R135 is a binding site for substrate. Catalysis depends on Y267, which acts as the Proton acceptor; specific for L-alanine. Residue M315 participates in substrate binding.

Belongs to the alanine racemase family. Pyridoxal 5'-phosphate serves as cofactor.

It carries out the reaction L-alanine = D-alanine. Its pathway is amino-acid biosynthesis; D-alanine biosynthesis; D-alanine from L-alanine: step 1/1. In terms of biological role, catalyzes the interconversion of L-alanine and D-alanine. May also act on other amino acids. The polypeptide is Alanine racemase (alr) (Geobacter sulfurreducens (strain ATCC 51573 / DSM 12127 / PCA)).